Here is a 358-residue protein sequence, read N- to C-terminus: 3-dehydroquinate synthase (358 aa).

Residues 70–75 (DGEQYK), 104–108 (GVIGD), 128–129 (TT), lysine 141, lysine 150, and 168–171 (CLHT) contribute to the NAD(+) site. Residues glutamate 183, histidine 246, and histidine 263 each contribute to the Zn(2+) site.

This sequence belongs to the sugar phosphate cyclases superfamily. Dehydroquinate synthase family. The cofactor is Co(2+). Zn(2+) is required as a cofactor. Requires NAD(+) as cofactor.

It localises to the cytoplasm. It carries out the reaction 7-phospho-2-dehydro-3-deoxy-D-arabino-heptonate = 3-dehydroquinate + phosphate. It participates in metabolic intermediate biosynthesis; chorismate biosynthesis; chorismate from D-erythrose 4-phosphate and phosphoenolpyruvate: step 2/7. Catalyzes the conversion of 3-deoxy-D-arabino-heptulosonate 7-phosphate (DAHP) to dehydroquinate (DHQ). The sequence is that of 3-dehydroquinate synthase from Shewanella loihica (strain ATCC BAA-1088 / PV-4).